The following is a 346-amino-acid chain: E3 ubiquitin-protein ligase ARK2C (346 aa).

Disordered stretches follow at residues 23–76 (PFQR…QHSG) and 267–288 (PHKY…GEES). The interval 266–268 (FPH) is ubiquitin binding. Over residues 275–284 (PQDGKGKKDE) the composition is skewed to basic and acidic residues. Zn(2+) contacts are provided by C294 and C297. The RING-type; atypical zinc finger occupies 294-335 (CTICLSMLEDGEDVRRLPCMHLFHQLCVDQWLAMSKKCPICR). A ubiquitin binding region spans residues 309–313 (RLPCM). Positions 317 and 320 each coordinate Zn(2+).

Belongs to the Arkadia family. Monomer; binding to the ubiquitin-conjugating enzyme E2 does not trigger homodimerization.

Its subcellular location is the nucleus. The catalysed reaction is S-ubiquitinyl-[E2 ubiquitin-conjugating enzyme]-L-cysteine + [acceptor protein]-L-lysine = [E2 ubiquitin-conjugating enzyme]-L-cysteine + N(6)-ubiquitinyl-[acceptor protein]-L-lysine.. Its activity is regulated as follows. Binds free ubiquitin non-covalently via its RING-type zinc finger. Ubiquitin-binding leads to enhance the E3 ubiquitin-protein ligase activity by stabilizing the ubiquitin-conjugating enzyme E2 (donor ubiquitin) in the 'closed' conformation and activating ubiquitin transfer. Functionally, E3 ubiquitin-protein ligase that acts as a regulator of motor axon elongation. Required for efficient motor axon extension in the dorsal forelimb by enhancing the transcriptional responses of the SMAD1/SMAD5/SMAD8 effectors, which are activated downstream of BMP. Acts by mediating ubiquitination and degradation of SMAD inhibitors such as SMAD6, SMAD7, SKI and SNON isoform of SKIL. This chain is E3 ubiquitin-protein ligase ARK2C, found in Homo sapiens (Human).